The sequence spans 938 residues: AP-2 complex subunit alpha-2 (938 aa).

A 1,2-diacyl-sn-glycero-3-phospho-(1D-myo-inositol-3,4,5-trisphosphate)-binding positions include 11–12 (RG), lysine 43, tyrosine 53, and 57–61 (KYVCK). Residues 615–681 (LKKKKGPSTV…TGPPPSSGGG (67 aa)) are disordered. A compositionally biased stretch (low complexity) spans 646–667 (PASTSAASTPSPSADLLGLGAV). Positions 668–677 (PPAPTGPPPS) are enriched in pro residues.

It belongs to the adaptor complexes large subunit family. Adaptor protein complex 2 (AP-2) is a heterotetramer composed of two large adaptins (alpha-type subunit AP2A1 or AP2A2 and beta-type subunit AP2B1), a medium adaptin (mu-type subunit AP2M1) and a small adaptin (sigma-type subunit AP2S1). Interacts with clathrin. Binds EPN1, EPS15, AMPH, SNAP91 and BIN1. Interacts with HIP1. Interacts with DGKD. Interacts with DENND1A, DENND1B and DENND1C. Interacts with FCHO1 and DAB2. Interacts with ATAT1; this interaction is required for efficient alpha-tubulin acetylation by ATAT1. Interacts with KIAA1107. Together with AP2B1 and AP2M1, it interacts with ADAM10; this interaction facilitates ADAM10 endocytosis from the plasma membrane during long-term potentiation in hippocampal neurons. Interacts with CLN3 (via dileucine motif). Interacts with ABCB11; this interaction regulates cell membrane expression of ABCB11 through its internalization in a clathrin-dependent manner and its subsequent degradation. Interacts with Cacfd1. Interacts with DNAJC6. In terms of tissue distribution, widely expressed.

Its subcellular location is the cell membrane. The protein resides in the membrane. It localises to the coated pit. In terms of biological role, component of the adaptor protein complex 2 (AP-2). Adaptor protein complexes function in protein transport via transport vesicles in different membrane traffic pathways. Adaptor protein complexes are vesicle coat components and appear to be involved in cargo selection and vesicle formation. AP-2 is involved in clathrin-dependent endocytosis in which cargo proteins are incorporated into vesicles surrounded by clathrin (clathrin-coated vesicles, CCVs) which are destined for fusion with the early endosome. The clathrin lattice serves as a mechanical scaffold but is itself unable to bind directly to membrane components. Clathrin-associated adaptor protein (AP) complexes which can bind directly to both the clathrin lattice and to the lipid and protein components of membranes are considered to be the major clathrin adaptors contributing the CCV formation. AP-2 also serves as a cargo receptor to selectively sort the membrane proteins involved in receptor-mediated endocytosis. AP-2 seems to play a role in the recycling of synaptic vesicle membranes from the presynaptic surface. AP-2 recognizes Y-X-X-[FILMV] (Y-X-X-Phi) and [ED]-X-X-X-L-[LI] endocytosis signal motifs within the cytosolic tails of transmembrane cargo molecules. AP-2 may also play a role in maintaining normal post-endocytic trafficking through the ARF6-regulated, non-clathrin pathway. During long-term potentiation in hippocampal neurons, AP-2 is responsible for the endocytosis of ADAM10. The AP-2 alpha subunit binds polyphosphoinositide-containing lipids, positioning AP-2 on the membrane. The AP-2 alpha subunit acts via its C-terminal appendage domain as a scaffolding platform for endocytic accessory proteins. The AP-2 alpha and AP-2 sigma subunits are thought to contribute to the recognition of the [ED]-X-X-X-L-[LI] motif. The sequence is that of AP-2 complex subunit alpha-2 from Rattus norvegicus (Rat).